We begin with the raw amino-acid sequence, 386 residues long: Cytochrome b (386 aa).

A run of 4 helical transmembrane segments spans residues 32–52 (FGSLLALCLIIQIVTGVTLAM), 76–98 (WLIRYLHANTASAFFFLVYLHVG), 113–133 (TWIIGSIILIVMMATAFLGYV), and 179–199 (FFALHFVLPFVLAALVIMHLI). Heme b is bound by residues histidine 82 and histidine 96. Residues histidine 183 and histidine 197 each coordinate heme b. Histidine 202 provides a ligand contact to a ubiquinone. 4 consecutive transmembrane segments (helical) span residues 226–246 (YIFKDLITIFLFFFVLSLFVF), 290–310 (LLGVIAMFSAILIILVMPITD), 322–342 (LSKVAFYVFVANFLILMQLGA), and 349–369 (FIEFGQISTVLYFSHFLVIMP).

Belongs to the cytochrome b family. As to quaternary structure, fungal cytochrome b-c1 complex contains 10 subunits; 3 respiratory subunits, 2 core proteins and 5 low-molecular weight proteins. Cytochrome b-c1 complex is a homodimer. It depends on heme b as a cofactor.

It is found in the mitochondrion inner membrane. Component of the ubiquinol-cytochrome c reductase complex (complex III or cytochrome b-c1 complex) that is part of the mitochondrial respiratory chain. The b-c1 complex mediates electron transfer from ubiquinol to cytochrome c. Contributes to the generation of a proton gradient across the mitochondrial membrane that is then used for ATP synthesis. The sequence is that of Cytochrome b (cob) from Talaromyces marneffei (Penicillium marneffei).